A 315-amino-acid chain; its full sequence is Jacalin-related lectin 10 (315 aa).

Positions 1–23 are cleaved as a signal peptide; that stretch reads MVIIYIFLFLSSAIIDSTGLAKA. Jacalin-type lectin domains lie at 24–165 and 168–312; these read QKLD…YLTT and PTKS…YFSP.

It belongs to the jacalin lectin family.

In Arabidopsis thaliana (Mouse-ear cress), this protein is Jacalin-related lectin 10 (JAL10).